Reading from the N-terminus, the 1881-residue chain is Ankyrin-1 (1881 aa).

Positions M1–F827 are 89 kDa domain. 23 ANK repeats span residues N44–T73, K77–A106, K110–V139, D143–V172, L174–V201, T205–F234, N238–T267, D271–A300, N304–D333, D337–S366, N370–A399, S403–V432, K436–A465, D469–L498, A502–C531, K535–A564, N568–S597, N601–A630, Q634–L663, S667–A696, M700–A729, L733–E762, and D766–F795. The residue at position 105 (N105) is a (3S)-3-hydroxyasparagine; by HIF1AN; partial. (3S)-3-hydroxyasparagine; by HIF1AN; partial is present on N233. S429 carries the post-translational modification Phosphoserine. (3S)-3-hydroxyasparagine; by HIF1AN; partial occurs at positions 431 and 464. (3S)-3-hydroxyasparagine; by HIF1AN; partial is present on residues N629 and N662. (3S)-3-hydroxyaspartate; by HIF1AN; partial is present on D695. (3S)-3-hydroxyasparagine; by HIF1AN; partial is present on N728. Position 759 is a phosphoserine (S759). A (3S)-3-hydroxyasparagine; by HIF1AN; partial modification is found at N761. Residues S781, S817, S834, and S856 each carry the phosphoserine modification. A disordered region spans residues E875–P904. The span at I890–P904 shows a compositional bias: polar residues. ZU5 domains lie at F913–R1068 and C1070–C1216. The residue at position 961 (T961) is a Phosphothreonine. Y1073 is modified (phosphotyrosine). Position 1082 is a phosphoserine (S1082). The UPA domain stretch occupies residues T1234–T1362. 2 positions are modified to phosphothreonine: T1378 and T1380. The tract at residues A1383–P1881 is 55 kDa regulatory domain. Phosphoserine is present on residues S1390, S1392, and S1396. Residue T1400 is modified to Phosphothreonine. The Death domain maps to A1403–G1487. Phosphoserine is present on residues S1428 and S1486. The interval S1486–Q1510 is disordered. The segment covering L1493–Y1504 has biased composition (basic and acidic residues). S1523 and S1533 each carry phosphoserine. The tract at residues S1583–P1613 is disordered. Positions S1588–G1612 are enriched in basic and acidic residues. S1617 is subject to Phosphoserine. 3 disordered regions span residues L1637–W1703, Q1718–N1791, and A1840–S1859. The segment covering E1642 to D1658 has biased composition (basic and acidic residues). Residues S1666, S1671, S1686, S1690, and S1696 each carry the phosphoserine modification. Residues I1683–E1694 show a composition bias toward polar residues. Composition is skewed to polar residues over residues Q1718–T1739 and S1758–S1771. The span at Q1772–G1781 shows a compositional bias: basic and acidic residues.

Component of the ankyrin-1 complex in the erythrocyte, composed of ANK1, RHCE, RHAG, SLC4A1, EPB42, GYPA, GYPB and AQP1. Interacts with a number of integral membrane proteins and cytoskeletal proteins. Interacts (via N-terminus) with SPTB/spectrin (beta chain). Also interacts with TTN/titin. Isoform Mu17 interacts with OBSCN isoform 3/obscurin. Interacts with HIF1AN. Interacts (via ANK 1-5 repeats) with RHCE; this interaction mediates the primary membrane attachment site for ANK1. Interacts (via ANK 1-2 repeats) with AQP1 (via the N-terminal). Interacts (via ANK 1-13 repeats) with EPB42. Interacts directly with SLC4A1 (via the cytoplasmic domain); this interaction is mediated by the SLC4A1 Band 3-II and Band 3-III dimers. In terms of processing, regulated by phosphorylation. Post-translationally, palmitoylated. Hydroxylated by HIF1AN at several asparagine and 1 aspartate residue within ANK repeat region. Hydroxylation seems to increase the conformational stability of this region and may also modulate protein-protein interactions mediated by the ANK repeat region. In terms of processing, (Microbial infection) Probably cleaved by P.falciparum SERA6; the cleavage probably causes the disruption of the actin cytoskeleton and the rupture of the erythrocyte cell membrane releasing the merozoites. In terms of tissue distribution, isoform Mu17, isoform Mu18, isoform Mu19 and isoform Mu20 are expressed in skeletal muscle. Isoform Br21 is expressed in brain.

It is found in the cytoplasm. It localises to the cytoskeleton. The protein localises to the membrane. Its subcellular location is the myofibril. The protein resides in the sarcomere. It is found in the m line. It localises to the sarcoplasmic reticulum. Its function is as follows. Component of the ankyrin-1 complex, a multiprotein complex involved in the stability and shape of the erythrocyte membrane. Attaches integral membrane proteins to cytoskeletal elements; binds to the erythrocyte membrane protein band 4.2, to Na-K ATPase, to the lymphocyte membrane protein GP85, and to the cytoskeletal proteins fodrin, tubulin, vimentin and desmin. Erythrocyte ankyrins also link spectrin (beta chain) to the cytoplasmic domain of the erythrocytes anion exchange protein; they retain most or all of these binding functions. Functionally, together with obscurin in skeletal muscle may provide a molecular link between the sarcoplasmic reticulum and myofibrils. In Homo sapiens (Human), this protein is Ankyrin-1.